A 104-amino-acid chain; its full sequence is Large ribosomal subunit protein uL24 (104 aa).

The protein belongs to the universal ribosomal protein uL24 family. In terms of assembly, part of the 50S ribosomal subunit.

One of two assembly initiator proteins, it binds directly to the 5'-end of the 23S rRNA, where it nucleates assembly of the 50S subunit. Functionally, one of the proteins that surrounds the polypeptide exit tunnel on the outside of the subunit. The sequence is that of Large ribosomal subunit protein uL24 from Clostridium perfringens (strain ATCC 13124 / DSM 756 / JCM 1290 / NCIMB 6125 / NCTC 8237 / Type A).